The following is a 310-amino-acid chain: tRNA pseudouridine synthase B (310 aa).

The Nucleophile role is filled by D37.

Belongs to the pseudouridine synthase TruB family. Type 1 subfamily.

It carries out the reaction uridine(55) in tRNA = pseudouridine(55) in tRNA. In terms of biological role, responsible for synthesis of pseudouridine from uracil-55 in the psi GC loop of transfer RNAs. In Deinococcus deserti (strain DSM 17065 / CIP 109153 / LMG 22923 / VCD115), this protein is tRNA pseudouridine synthase B.